The following is a 267-amino-acid chain: Zerumbone synthase (267 aa).

Residue 9-33 participates in NAD(+) binding; it reads LVTGGASGIGESIARLFIEHGAKIC. S142 is a substrate binding site. Y155 functions as the Proton acceptor in the catalytic mechanism.

It belongs to the short-chain dehydrogenases/reductases (SDR) family. In terms of tissue distribution, expressed in leaves, stems and rhizomes.

The catalysed reaction is 10-hydroxy-alpha-humulene + NAD(+) = zerumbone + NADH + H(+). In terms of biological role, catalyzes 8-hydroxy-alpha-humulene into zerumbone in presence of NAD. Also converts borneol to camphor in vitro. Zerumbone is a highly promising multi-anticancer agent. In Zingiber zerumbet (Shampoo ginger), this protein is Zerumbone synthase (ZSD1).